Consider the following 326-residue polypeptide: Serpentine receptor class alpha-12 (326 aa).

At 1–17 the chain is on the extracellular side; sequence MSCASEVQAQLFTHPVQ. A helical membrane pass occupies residues 18 to 38; sequence IIYACVQTVLFLATIIGSLLA. At 39 to 54 the chain is on the cytoplasmic side; that stretch reads IVQLCKKTTIPDSTKV. A helical membrane pass occupies residues 55–75; it reads LLIGALFFANAHELAYFSSPF. Over 76-101 the chain is Extracellular; it reads KVFKMNLFHTNTSCYPLASTLECIPT. Residues 102–122 traverse the membrane as a helical segment; the sequence is TTVLAMGISGNMLIQSALSIF. Topologically, residues 123–138 are cytoplasmic; it reads RLLATIFPVCYSRMRA. The helical transmembrane segment at 139–159 threads the bilayer; sequence LPGVVLLFMVLIPSFLSYSWI. The Extracellular portion of the chain corresponds to 160–185; the sequence is RSDIVLDDYQMFCSQWSANISSRANT. A helical membrane pass occupies residues 186–206; that stretch reads YLEYCSYLTVAHIIINALIIL. The Cytoplasmic portion of the chain corresponds to 207-234; that stretch reads RNRSVESKCRFDVQQRYLNSETLKTTQT. Residues 235–255 traverse the membrane as a helical segment; it reads ICYLSIAQFLAMFLYSGGVLF. The Extracellular segment spans residues 256–270; sequence MRKNQKNIPTLIYIN. Residues 271–291 form a helical membrane-spanning segment; that stretch reads VIVWVYAPPYACVSLAPLILF. The Cytoplasmic portion of the chain corresponds to 292 to 326; the sequence is SLWNLKKQRQIRIQSITVQKETQEDHIRKLQLSWG.

The protein belongs to the nematode receptor-like protein sra family.

The protein resides in the membrane. The protein is Serpentine receptor class alpha-12 of Caenorhabditis briggsae.